A 194-amino-acid polypeptide reads, in one-letter code: Large ribosomal subunit protein eL15 (194 aa).

Residues 165 to 194 form a disordered region; the sequence is AGKKGRGLMNKGKGAEKVRPGIRANKKLGK.

This sequence belongs to the eukaryotic ribosomal protein eL15 family.

The protein is Large ribosomal subunit protein eL15 of Methanococcus aeolicus (strain ATCC BAA-1280 / DSM 17508 / OCM 812 / Nankai-3).